The following is a 586-amino-acid chain: Exocyst complex component EXO70A3 (586 aa).

N-linked (GlcNAc...) asparagine glycans are attached at residues Asn-65 and Asn-106. Residues 119 to 149 (CLPSNLRPPSDDEGSDGKSHDPQSNGLGKTD) form a disordered region. Residues 258-278 (FAEITTISFGMLLSFGYAIAI) form a helical membrane-spanning segment. N-linked (GlcNAc...) asparagine glycosylation is found at Asn-321 and Asn-487.

The protein belongs to the EXO70 family. As to quaternary structure, subunit of the exocyst complex. In terms of tissue distribution, confined to the outer layer of the columella cells in the root tips of young seedlings.

Its subcellular location is the membrane. Component of the exocyst complex involved in the docking of exocytic vesicles with fusion sites on the plasma membrane during regulated or polarized secretion. Involved in PIN4 exocytosis and gravitropic responses in columella cells. By monitoring PIN4 distribution in columella cells, modulates auxin repartition and subsequently regulates the root system architecture (RSA), thus being a component of the auxin-dependent root directional growth (ARD). The chain is Exocyst complex component EXO70A3 from Arabidopsis thaliana (Mouse-ear cress).